The primary structure comprises 318 residues: Ribose-phosphate pyrophosphokinase 2 (318 aa).

Position 96 to 101 (96 to 101 (RQDKKD)) interacts with ATP. Mg(2+)-binding residues include aspartate 128, histidine 130, aspartate 139, and aspartate 143. Histidine 130 contacts ATP. The interval 212–227 (KDRVAILVDDMADTCG) is binding of phosphoribosylpyrophosphate.

Belongs to the ribose-phosphate pyrophosphokinase family. As to quaternary structure, homodimer. The active form is probably a hexamer composed of 3 homodimers. It depends on Mg(2+) as a cofactor.

The catalysed reaction is D-ribose 5-phosphate + ATP = 5-phospho-alpha-D-ribose 1-diphosphate + AMP + H(+). It functions in the pathway metabolic intermediate biosynthesis; 5-phospho-alpha-D-ribose 1-diphosphate biosynthesis; 5-phospho-alpha-D-ribose 1-diphosphate from D-ribose 5-phosphate (route I): step 1/1. With respect to regulation, activated by magnesium and inorganic phosphate. Competitively or non-competitively inhibited by ADP, 2,3-bisphosphoglyceride or GDP. In terms of biological role, catalyzes the synthesis of phosphoribosylpyrophosphate (PRPP) that is essential for nucleotide synthesis. The polypeptide is Ribose-phosphate pyrophosphokinase 2 (prps2) (Xenopus tropicalis (Western clawed frog)).